A 1488-amino-acid chain; its full sequence is Calmodulin binding protein PICBP (1488 aa).

Disordered regions lie at residues 1–31 (MSNPMFPEKWEESSTSKSSRRVHKRRERKMW), 63–112 (TAES…SRIS), 280–329 (GPLG…GRSS), and 378–414 (HDHDDGKVDGTTSDGTVGDNEEVCREGSSGELREEDG). The segment covering 18-31 (SSRRVHKRRERKMW) has biased composition (basic residues). The span at 76–86 (DDSRTYSKSSD) shows a compositional bias: basic and acidic residues. The segment covering 98–107 (SVKRRAKSKS) has biased composition (basic residues). A compositionally biased stretch (acidic residues) spans 297 to 312 (DNVDGDSDEEVFEEEV). Calmodulin-binding regions lie at residues 493–592 (TFHM…SLIP) and 831–938 (NSLK…DIVL). Disordered regions lie at residues 816–844 (IPDSSSDEESVSESSNSLKEEKEHQGETK) and 941–971 (HDTPKQTKNSDTPRNNDETKEGKPRVEEGCE). Composition is skewed to basic and acidic residues over residues 833–844 (LKEEKEHQGETK) and 954–971 (RNNDETKEGKPRVEEGCE). The tract at residues 1135–1229 (EKRVKGWNNV…SLLAQAFDTI (95 aa)) is calmodulin-binding. 2 disordered regions span residues 1232–1252 (QDMGSGSTPGSAASSRNISRQ) and 1316–1340 (EKNQTLPEETRKEEEEEELKEDTSV). Over residues 1235-1252 (GSGSTPGSAASSRNISRQ) the composition is skewed to low complexity. The span at 1316 to 1328 (EKNQTLPEETRKE) shows a compositional bias: basic and acidic residues. The tract at residues 1379–1483 (RQKSETLQVS…QLLVQAFESL (105 aa)) is calmodulin-binding.

Its function is as follows. Binds calmodulin in a calcium-dependent manner in vitro. May play a role in general plant defense including R gene-mediated responses. The protein is Calmodulin binding protein PICBP of Arabidopsis thaliana (Mouse-ear cress).